We begin with the raw amino-acid sequence, 90 residues long: Secretoglobin family 1D member 2 (90 aa).

Positions Met1–Ala21 are cleaved as a signal peptide.

This sequence belongs to the secretoglobin family. Lipophilin subfamily. As to expression, highest expression was found in skeletal muscle. Expressed as well in thymus, trachea, kidney, steroid responsive tissues (prostate, testis, uterus, breast and ovary) and salivary gland.

It is found in the secreted. Functionally, may bind androgens and other steroids, may also bind estramustine, a chemotherapeutic agent used for prostate cancer. May be under transcriptional regulation of steroid hormones. This chain is Secretoglobin family 1D member 2 (SCGB1D2), found in Homo sapiens (Human).